We begin with the raw amino-acid sequence, 305 residues long: UDP-3-O-acyl-N-acetylglucosamine deacetylase (305 aa).

Positions 79, 238, and 242 each coordinate Zn(2+). The active-site Proton donor is His-265.

Belongs to the LpxC family. It depends on Zn(2+) as a cofactor.

It carries out the reaction a UDP-3-O-[(3R)-3-hydroxyacyl]-N-acetyl-alpha-D-glucosamine + H2O = a UDP-3-O-[(3R)-3-hydroxyacyl]-alpha-D-glucosamine + acetate. It functions in the pathway glycolipid biosynthesis; lipid IV(A) biosynthesis; lipid IV(A) from (3R)-3-hydroxytetradecanoyl-[acyl-carrier-protein] and UDP-N-acetyl-alpha-D-glucosamine: step 2/6. Functionally, catalyzes the hydrolysis of UDP-3-O-myristoyl-N-acetylglucosamine to form UDP-3-O-myristoylglucosamine and acetate, the committed step in lipid A biosynthesis. The protein is UDP-3-O-acyl-N-acetylglucosamine deacetylase of Shigella boydii serotype 4 (strain Sb227).